The chain runs to 325 residues: Tetraacyldisaccharide 4'-kinase (325 aa).

55–62 (TAGGNGKT) provides a ligand contact to ATP.

The protein belongs to the LpxK family.

The catalysed reaction is a lipid A disaccharide + ATP = a lipid IVA + ADP + H(+). It participates in glycolipid biosynthesis; lipid IV(A) biosynthesis; lipid IV(A) from (3R)-3-hydroxytetradecanoyl-[acyl-carrier-protein] and UDP-N-acetyl-alpha-D-glucosamine: step 6/6. Its function is as follows. Transfers the gamma-phosphate of ATP to the 4'-position of a tetraacyldisaccharide 1-phosphate intermediate (termed DS-1-P) to form tetraacyldisaccharide 1,4'-bis-phosphate (lipid IVA). This chain is Tetraacyldisaccharide 4'-kinase, found in Salmonella enteritidis PT4 (strain P125109).